Here is a 374-residue protein sequence, read N- to C-terminus: Potassium channel subfamily K member 9 (374 aa).

The Cytoplasmic portion of the chain corresponds to 1 to 8 (MKRQNVRT). Residues 9-29 (LSLIICTFTYLLVGAAVFDAL) form a helical membrane-spanning segment. Residues 30-88 (ESDYEMREEEKLKAEEIRLKGKYNISSEDYRQLELVIMQSEPHRAGVQWKFAGSFYFAI) lie on the Extracellular side of the membrane. Asparagine 53 carries N-linked (GlcNAc...) asparagine glycosylation. The pore-forming intramembrane region spans 89–101 (TVITTIGYGHAAP). The Extracellular portion of the chain corresponds to 102–107 (GTDAGK). The helical transmembrane segment at 108-128 (AFCMFYAVLGIPLTLVMFQSL) threads the bilayer. At 129-158 (GERMNTFVKYLLKRIKKCCGMHSTDVSMEN) the chain is on the cytoplasmic side. Residues 159-179 (MVTVGFFSCMGTLCIGAAAFS) form a helical membrane-spanning segment. The Extracellular segment spans residues 180–194 (HYEEWSFFQAYYYCF). Residues 195–207 (ITLTTIGFGDYVA) constitute an intramembrane region (pore-forming). Residues 208–218 (LQKNRALQKKP) lie on the Extracellular side of the membrane. Residues 219–239 (LYVAFSFMYILVGLTVIGAFL) traverse the membrane as a helical segment. The Cytoplasmic portion of the chain corresponds to 240 to 374 (NLVVLRFLTM…HRLMKRRKSI (135 aa)).

This sequence belongs to the two pore domain potassium channel (TC 1.A.1.8) family. As to quaternary structure, homodimer. May form heterodimers with other family members.

Its subcellular location is the cell membrane. PH-dependent, voltage-insensitive, background potassium channel protein. The polypeptide is Potassium channel subfamily K member 9 (kcnk9) (Xenopus laevis (African clawed frog)).